The primary structure comprises 450 residues: Tubulin alpha-1 chain (450 aa).

7 residues coordinate GTP: Gln-11, Glu-71, Gly-144, Thr-145, Thr-179, Asn-206, and Asn-228. Glu-71 provides a ligand contact to Mg(2+). Glu-254 is a catalytic residue.

Belongs to the tubulin family. In terms of assembly, dimer of alpha and beta chains. A typical microtubule is a hollow water-filled tube with an outer diameter of 25 nm and an inner diameter of 15 nM. Alpha-beta heterodimers associate head-to-tail to form protofilaments running lengthwise along the microtubule wall with the beta-tubulin subunit facing the microtubule plus end conferring a structural polarity. Microtubules usually have 13 protofilaments but different protofilament numbers can be found in some organisms and specialized cells. It depends on Mg(2+) as a cofactor. In terms of processing, undergoes a tyrosination/detyrosination cycle, the cyclic removal and re-addition of a C-terminal tyrosine residue by the enzymes tubulin tyrosine carboxypeptidase (TTCP) and tubulin tyrosine ligase (TTL), respectively.

It is found in the cytoplasm. The protein localises to the cytoskeleton. The enzyme catalyses GTP + H2O = GDP + phosphate + H(+). Functionally, tubulin is the major constituent of microtubules, a cylinder consisting of laterally associated linear protofilaments composed of alpha- and beta-tubulin heterodimers. Microtubules grow by the addition of GTP-tubulin dimers to the microtubule end, where a stabilizing cap forms. Below the cap, tubulin dimers are in GDP-bound state, owing to GTPase activity of alpha-tubulin. The polypeptide is Tubulin alpha-1 chain (TUBA1) (Hordeum vulgare (Barley)).